Reading from the N-terminus, the 333-residue chain is MTAPENLDAALRPKTLTEYVGQEKLKDKLGVYLQAARGRREALDHTLLFGPPGLGKTTLAHIIAYELGVNIRVTSGPAIEKPGDLAAILTNSLEEGDVLFIDEIHRLGRVAEEHLYPAMEDFKLDIVLGQGPAARTIELPLPRFTLVGATTRPGLITAPMRSRFGIIEHLEYYTAEEIATNLLRDARLLGFGLDEEAGLEIGARSRGTMRIAKRLLRRVRDYADVAGETTIGLERAQSALDKLGLDSAGLDDRDKKYLETLIHRFAGGPVGVDTLATAISEDALTLEDVYEPYLIQLGFIKRTPRGRVATAHAYDHLGLPPGGIDDGNGIFLN.

The interval 1-173 (MTAPENLDAA…FGIIEHLEYY (173 aa)) is large ATPase domain (RuvB-L). ATP contacts are provided by residues Leu11, Arg12, Gly53, Lys56, Thr57, Thr58, 120–122 (EDF), Arg163, Tyr173, and Arg210. Thr57 provides a ligand contact to Mg(2+). A small ATPAse domain (RuvB-S) region spans residues 174–244 (TAEEIATNLL…RAQSALDKLG (71 aa)). Residues 247–333 (SAGLDDRDKK…IDDGNGIFLN (87 aa)) are head domain (RuvB-H). Residues Arg302 and Arg307 each coordinate DNA.

Belongs to the RuvB family. As to quaternary structure, homohexamer. Forms an RuvA(8)-RuvB(12)-Holliday junction (HJ) complex. HJ DNA is sandwiched between 2 RuvA tetramers; dsDNA enters through RuvA and exits via RuvB. An RuvB hexamer assembles on each DNA strand where it exits the tetramer. Each RuvB hexamer is contacted by two RuvA subunits (via domain III) on 2 adjacent RuvB subunits; this complex drives branch migration. In the full resolvosome a probable DNA-RuvA(4)-RuvB(12)-RuvC(2) complex forms which resolves the HJ.

It localises to the cytoplasm. The enzyme catalyses ATP + H2O = ADP + phosphate + H(+). In terms of biological role, the RuvA-RuvB-RuvC complex processes Holliday junction (HJ) DNA during genetic recombination and DNA repair, while the RuvA-RuvB complex plays an important role in the rescue of blocked DNA replication forks via replication fork reversal (RFR). RuvA specifically binds to HJ cruciform DNA, conferring on it an open structure. The RuvB hexamer acts as an ATP-dependent pump, pulling dsDNA into and through the RuvAB complex. RuvB forms 2 homohexamers on either side of HJ DNA bound by 1 or 2 RuvA tetramers; 4 subunits per hexamer contact DNA at a time. Coordinated motions by a converter formed by DNA-disengaged RuvB subunits stimulates ATP hydrolysis and nucleotide exchange. Immobilization of the converter enables RuvB to convert the ATP-contained energy into a lever motion, pulling 2 nucleotides of DNA out of the RuvA tetramer per ATP hydrolyzed, thus driving DNA branch migration. The RuvB motors rotate together with the DNA substrate, which together with the progressing nucleotide cycle form the mechanistic basis for DNA recombination by continuous HJ branch migration. Branch migration allows RuvC to scan DNA until it finds its consensus sequence, where it cleaves and resolves cruciform DNA. This Deinococcus radiodurans (strain ATCC 13939 / DSM 20539 / JCM 16871 / CCUG 27074 / LMG 4051 / NBRC 15346 / NCIMB 9279 / VKM B-1422 / R1) protein is Holliday junction branch migration complex subunit RuvB.